The chain runs to 237 residues: Ferritin, mitochondrial (237 aa).

Residues 1–49 constitute a mitochondrion transit peptide; it reads MLSCFWFFSKHISSALMSLPRVLHRFTAPQCLASRYPLGPLLASPRRLL. The region spanning 66-215 is the Ferritin-like diiron domain; sequence QNFHPDSEAA…DHVHNLVTMG (150 aa). Residues E83, E118, H121, E163, and Q197 each contribute to the Fe cation site.

The protein belongs to the ferritin family. In terms of assembly, homooligomer of 24 subunits. The functional molecule is roughly spherical and contains a central cavity into which the polymeric mineral iron core is deposited.

The protein localises to the mitochondrion. The enzyme catalyses 4 Fe(2+) + O2 + 4 H(+) = 4 Fe(3+) + 2 H2O. Its function is as follows. Catalyzes the oxidation of ferrous iron(II) to ferric iron(III) and stores iron in a soluble, non-toxic, readily available form. Important for iron homeostasis. Iron is taken up in the ferrous form and deposited as ferric hydroxides after oxidation. This is Ferritin, mitochondrial from Mus musculus (Mouse).